The sequence spans 2282 residues: Serine/threonine-protein kinase TEL1 (2282 aa).

The FAT domain maps to 1325 to 1844 (EIVNSALTLH…LYQISSLMRT (520 aa)). A PI3K/PI4K catalytic domain is found at 1939–2250 (VLAQVIKAGG…LSGVKGKLAV (312 aa)). Residues 1945 to 1951 (KAGGISH) are G-loop. The tract at residues 2115 to 2123 (GIGDRHCNN) is catalytic loop. The segment at 2135–2159 (HIDLGISFDQGKNLTVPEKVPFRLT) is activation loop. The FATC domain maps to 2250–2282 (VRLSTEAVVRELIGEAVSVENLAVIFHGWTPFY).

This sequence belongs to the PI3/PI4-kinase family. ATM subfamily. Associates with DNA double-strand breaks.

Its subcellular location is the nucleus. The protein localises to the chromosome. The protein resides in the telomere. It carries out the reaction L-seryl-[protein] + ATP = O-phospho-L-seryl-[protein] + ADP + H(+). The catalysed reaction is L-threonyl-[protein] + ATP = O-phospho-L-threonyl-[protein] + ADP + H(+). Its function is as follows. Serine/threonine protein kinase which activates checkpoint signaling upon genotoxic stresses such as ionizing radiation (IR), ultraviolet light (UV), or DNA replication stalling, thereby acting as a DNA damage sensor. Recognizes the substrate consensus sequence [ST]-Q. Phosphorylates histone H2A to form H2AS128ph (gamma-H2A) at sites of DNA damage, involved in the regulation of DNA damage response mechanism. Required for the control of telomere length and genome stability. This chain is Serine/threonine-protein kinase TEL1 (TEL1), found in Yarrowia lipolytica (strain CLIB 122 / E 150) (Yeast).